We begin with the raw amino-acid sequence, 799 residues long: Sodium- and chloride-dependent glycine transporter 2 (799 aa).

The tract at residues 1–64 (MDCSAPKEMN…RSASTGAQTF (64 aa)) is disordered. Topologically, residues 1-201 (MDCSAPKEMN…ARGNWSSKLD (201 aa)) are cytoplasmic. Residues 40 to 57 (PAAAPAAAVQPPRVPRSA) are compositionally biased toward low complexity. Ser-58 carries the post-translational modification Phosphoserine. Thr-59 carries the post-translational modification Phosphothreonine. Phosphoserine is present on Ser-86. 3 consecutive transmembrane segments (helical) span residues 202 to 222 (FILSMVGYAVGLGNVWRFPYL), 230 to 249 (AFLIPYLMMLALAGLPIFFL), and 273 to 293 (GCGIAMLIISVLIAIYYNVII). The Na(+) site is built by Gly-208, Ala-210, Val-211, and Asn-215. The Extracellular portion of the chain corresponds to 294-395 (CYTLFYLFAS…AGIEYPGEIR (102 aa)). Cys-313 and Cys-322 form a disulfide bridge. N-linked (GlcNAc...) asparagine glycans are attached at residues Asn-345, Asn-355, Asn-360, and Asn-366. 5 helical membrane-spanning segments follow: residues 396 to 414 (WPLAFCLFLAWVIVYASLA), 423 to 440 (VVYFTATFPYVVLVILLI), 476 to 493 (IFFSLSAAWGGLITLSSY), 505 to 526 (LIVTCTNSATSIFAGFVIFSVI), and 559 to 578 (LPLSPFWAIIFFLMLLTLGL). Residues Ser-479, Asn-511, Leu-576, and Asp-579 each coordinate Na(+). 4 helical membrane passes run 606-624 (VFTLGCCICFFIMGFPMIT), 640-660 (SYALVIIAIFELVGISYVYGL), 681-700 (VCWAFVTPTILTFILCFSFY), and 719-737 (LGWLMLACSVIWIPIMFVI). At 738–799 (KMYLAPGRFI…VKDLELGTQC (62 aa)) the chain is on the cytoplasmic side.

The protein belongs to the sodium:neurotransmitter symporter (SNF) (TC 2.A.22) family. SLC6A5 subfamily. In terms of processing, N-glycosylated. In terms of tissue distribution, specifically expressed in spinal cord, brain stem, and to a lesser extent in the cerebellum.

Its subcellular location is the cell membrane. It catalyses the reaction glycine(out) + chloride(out) + 3 Na(+)(out) = glycine(in) + chloride(in) + 3 Na(+)(in). Its function is as follows. Sodium- and chloride-dependent glycine transporter. Terminates the action of glycine by its high affinity sodium-dependent reuptake into presynaptic terminals. May be responsible for the termination of neurotransmission at strychnine-sensitive glycinergic synapses. This is Sodium- and chloride-dependent glycine transporter 2 (Slc6a5) from Rattus norvegicus (Rat).